A 275-amino-acid chain; its full sequence is MSNSRQHQGHFARKRFGQNFLVDHGVIDSIVATIGPARGQRMVEIGPGLGALTGPLIERLATPESPLHAVELDRDLIGRLQQRFGALLELHAGDALAFDFRSLAAPGDKPSLRIVGNLPYNISSPLLFHLMTFADAVIDQHFMLQNEVVERMVAEPGTKAFSRLSVMLQYRYVMEKMLDVPPESFQPPPKVDSAIVRMIPYEPHELPDVDPVLLGEIVTAAFSQRRKMLRNTLGDYRETIDFDALGFDLARRAEDVSVAEYVGVAQALAALRKAG.

S-adenosyl-L-methionine is bound by residues asparagine 19, leucine 21, glycine 46, glutamate 71, aspartate 94, and asparagine 117.

It belongs to the class I-like SAM-binding methyltransferase superfamily. rRNA adenine N(6)-methyltransferase family. RsmA subfamily.

The protein resides in the cytoplasm. The enzyme catalyses adenosine(1518)/adenosine(1519) in 16S rRNA + 4 S-adenosyl-L-methionine = N(6)-dimethyladenosine(1518)/N(6)-dimethyladenosine(1519) in 16S rRNA + 4 S-adenosyl-L-homocysteine + 4 H(+). Specifically dimethylates two adjacent adenosines (A1518 and A1519) in the loop of a conserved hairpin near the 3'-end of 16S rRNA in the 30S particle. May play a critical role in biogenesis of 30S subunits. This is Ribosomal RNA small subunit methyltransferase A from Burkholderia orbicola (strain MC0-3).